The following is a 385-amino-acid chain: 3-hydroxyisobutyryl-CoA hydrolase, mitochondrial (385 aa).

Glu-120, Gly-145, Glu-168, and Asp-176 together coordinate substrate.

It belongs to the enoyl-CoA hydratase/isomerase family.

It localises to the mitochondrion. The catalysed reaction is 3-hydroxy-2-methylpropanoyl-CoA + H2O = 3-hydroxy-2-methylpropanoate + CoA + H(+). It participates in amino-acid degradation; L-valine degradation. Functionally, hydrolyzes 3-hydroxyisobutyryl-CoA (HIBYL-CoA), a saline catabolite. Has high activity toward isobutyryl-CoA. Could be an isobutyryl-CoA dehydrogenase that functions in valine catabolism. Also hydrolyzes 3-hydroxypropanoyl-CoA. The chain is 3-hydroxyisobutyryl-CoA hydrolase, mitochondrial (hibch) from Xenopus tropicalis (Western clawed frog).